A 63-amino-acid chain; its full sequence is Arabinogalactan protein 22 (63 aa).

Positions 1 to 27 (MASLKFPLEILAVFVIISVILLPIAQS) are cleaved as a signal peptide. 3 positions are modified to 4-hydroxyproline: proline 32, proline 34, and proline 36. 3 O-linked (Ara...) hydroxyproline glycosylation sites follow: proline 32, proline 34, and proline 36. Serine 38 carries the GPI-anchor amidated serine lipid modification. Positions 39–63 (DGTSIDQGIAYVLMMVALALTYFIH) are cleaved as a propeptide — removed in mature form.

It belongs to the AG-peptide AGP family. Post-translationally, contains 4-hydroxyproline; hydroxylated on Pro-32, Pro-34 and Pro-36. In terms of processing, O-glycosylated on hydroxyprolines; noncontiguous hydroxylproline residues are glycosylated with arabinogalactan.

The protein resides in the cell membrane. Functionally, proteoglycan that seems to be implicated in diverse developmental roles such as differentiation, cell-cell recognition, embryogenesis and programmed cell death. The protein is Arabinogalactan protein 22 of Arabidopsis thaliana (Mouse-ear cress).